Here is a 238-residue protein sequence, read N- to C-terminus: LDCTVIDGNLKQIDAGSGSVVGVNNLNETFVLIDNVFTKISGSLKHFSVGPAGQLGVNTANNIFKYQSGGFVQLAGLLKQVDAGGDQIIAGVNMYDDIYCLNMDANNKWPSSNTPWVQINGKLKYYSCGPYSCWGVNSNDQIFIMKDVSSNVCSGSGSFINIPGLLSMIEVATDGSVFGVNSQGNLYQRTGVTRSKPDGTDWISMVACPNGHKHVSFDLGVLWLVCVDGSIRKCILTD.

A run of 5 repeats spans residues 1–34, 35–68, 69–106, 107–156, and 157–199. The segment at 1-199 is 5 X approximate tandem repeats; sequence LDCTVIDGNL…TGVTRSKPDG (199 aa). Intrachain disulfides connect Cys3–Cys234, Cys100–Cys153, Cys128–Cys133, and Cys208–Cys226. N-linked (GlcNAc...) asparagine glycosylation occurs at Asn27.

This sequence belongs to the tectonin family. As to expression, expressed in the eggs.

It is found in the secreted. Lipopolysaccharide-binding protein with a very low agglutinating activity for human A-type erythrocytes and interacts with both Gram-positive and Gram-negative bacteria. This Cyprinus carpio (Common carp) protein is Fish-egg lectin.